The chain runs to 158 residues: 6,7-dimethyl-8-ribityllumazine synthase (158 aa).

Residues F23, 61 to 63 (SFE), and 85 to 87 (AVI) contribute to the 5-amino-6-(D-ribitylamino)uracil site. Position 90–91 (90–91 (DT)) interacts with (2S)-2-hydroxy-3-oxobutyl phosphate. H93 acts as the Proton donor in catalysis. F118 lines the 5-amino-6-(D-ribitylamino)uracil pocket. Residue R132 coordinates (2S)-2-hydroxy-3-oxobutyl phosphate.

The protein belongs to the DMRL synthase family.

It catalyses the reaction (2S)-2-hydroxy-3-oxobutyl phosphate + 5-amino-6-(D-ribitylamino)uracil = 6,7-dimethyl-8-(1-D-ribityl)lumazine + phosphate + 2 H2O + H(+). It functions in the pathway cofactor biosynthesis; riboflavin biosynthesis; riboflavin from 2-hydroxy-3-oxobutyl phosphate and 5-amino-6-(D-ribitylamino)uracil: step 1/2. In terms of biological role, catalyzes the formation of 6,7-dimethyl-8-ribityllumazine by condensation of 5-amino-6-(D-ribitylamino)uracil with 3,4-dihydroxy-2-butanone 4-phosphate. This is the penultimate step in the biosynthesis of riboflavin. This Prochlorococcus marinus (strain NATL1A) protein is 6,7-dimethyl-8-ribityllumazine synthase.